Reading from the N-terminus, the 124-residue chain is Large ribosomal subunit protein bL12 (124 aa).

The protein belongs to the bacterial ribosomal protein bL12 family. As to quaternary structure, homodimer. Part of the ribosomal stalk of the 50S ribosomal subunit. Forms a multimeric L10(L12)X complex, where L10 forms an elongated spine to which 2 to 4 L12 dimers bind in a sequential fashion. Binds GTP-bound translation factors.

Forms part of the ribosomal stalk which helps the ribosome interact with GTP-bound translation factors. Is thus essential for accurate translation. The sequence is that of Large ribosomal subunit protein bL12 from Azobacteroides pseudotrichonymphae genomovar. CFP2.